A 201-amino-acid polypeptide reads, in one-letter code: Glutathione peroxidase 1 (201 aa).

S32 carries the phosphoserine modification. The active site involves U47. U47 is a non-standard amino acid (selenocysteine). An N6-acetyllysine; alternate mark is found at K86 and K112. N6-succinyllysine; alternate occurs at positions 86 and 112. K119 carries the N6-acetyllysine modification. N6-acetyllysine; alternate is present on K146. Residue K146 is modified to N6-succinyllysine; alternate. Phosphoserine is present on residues S195 and S199.

The protein belongs to the glutathione peroxidase family. As to quaternary structure, homotetramer. Interacts with MIEN1. Post-translationally, during periods of oxidative stress, Sec-47 may react with a superoxide radical, irreversibly lose hydroselenide and be converted to dehydroalanine. Expressed in liver and lung.

The protein localises to the cytoplasm. The protein resides in the mitochondrion. The enzyme catalyses 2 glutathione + H2O2 = glutathione disulfide + 2 H2O. The catalysed reaction is a hydroperoxy polyunsaturated fatty acid + 2 glutathione = a hydroxy polyunsaturated fatty acid + glutathione disulfide + H2O. It catalyses the reaction tert-butyl hydroperoxide + 2 glutathione = tert-butanol + glutathione disulfide + H2O. It carries out the reaction cumene hydroperoxide + 2 glutathione = 2-phenylpropan-2-ol + glutathione disulfide + H2O. The enzyme catalyses (13S)-hydroperoxy-(9Z,11E)-octadecadienoate + 2 glutathione = (13S)-hydroxy-(9Z,11E)-octadecadienoate + glutathione disulfide + H2O. The catalysed reaction is (9S)-hydroperoxy-(10E,12Z)-octadecadienoate + 2 glutathione = (9S)-hydroxy-(10E,12Z)-octadecadienoate + glutathione disulfide + H2O. It catalyses the reaction (5S)-hydroperoxy-(6E,8Z,11Z,14Z)-eicosatetraenoate + 2 glutathione = (5S)-hydroxy-(6E,8Z,11Z,14Z)-eicosatetraenoate + glutathione disulfide + H2O. It carries out the reaction (12S)-hydroperoxy-(5Z,8Z,10E,14Z)-eicosatetraenoate + 2 glutathione = (12S)-hydroxy-(5Z,8Z,10E,14Z)-eicosatetraenoate + glutathione disulfide + H2O. The enzyme catalyses (12R)-hydroperoxy-(5Z,8Z,10E,14Z)-eicosatetraenoate + 2 glutathione = (12R)-hydroxy-(5Z,8Z,10E,14Z)-eicosatetraenoate + glutathione disulfide + H2O. The catalysed reaction is (15S)-hydroperoxy-(5Z,8Z,11Z,13E)-eicosatetraenoate + 2 glutathione = (15S)-hydroxy-(5Z,8Z,11Z,13E)-eicosatetraenoate + glutathione disulfide + H2O. It catalyses the reaction (5S)-hydroperoxy-(6E,8Z,11Z,14Z,17Z)-eicosapentaenoate + 2 glutathione = (5S)-hydroxy-(6E,8Z,11Z,14Z,17Z)-eicosapentaenoate + glutathione disulfide + H2O. It carries out the reaction (12S)-hydroperoxy-(5Z,8Z,10E,14Z,17Z)-eicosapentaenoate + 2 glutathione = (12S)-hydroxy-(5Z,8Z,10E,14Z,17Z)-eicosapentaenoate + glutathione disulfide + H2O. The enzyme catalyses (15S)-hydroperoxy-(5Z,8Z,11Z,13E,17Z)-eicosapentaenoate + 2 glutathione = (15S)-hydroxy-(5Z,8Z,11Z,13E,17Z)-eicosapentaenoate + glutathione disulfide + H2O. The catalysed reaction is (15S)-hydroperoxy-(11Z,13E)-eicosadienoate + 2 glutathione = (15S)-hydroxy-(11Z,13E)-eicosadienoate + glutathione disulfide + H2O. It catalyses the reaction (17S)-hydroperoxy-(4Z,7Z,10Z,13Z,15E,19Z)-docosahexaenoate + 2 glutathione = (17S)-hydroxy-(4Z,7Z,10Z,13Z,15E,19Z)-docosahexaenoate + glutathione disulfide + H2O. Functionally, catalyzes the reduction of hydroperoxides in a glutathione-dependent manner thus regulating cellular redox homeostasis. Can reduce small soluble hydroperoxides such as H2O2, cumene hydroperoxide and tert-butyl hydroperoxide, as well as several fatty acid-derived hydroperoxides. In platelets catalyzes the reduction of 12-hydroperoxyeicosatetraenoic acid, the primary product of the arachidonate 12-lipoxygenase pathway. This Rattus norvegicus (Rat) protein is Glutathione peroxidase 1.